Reading from the N-terminus, the 100-residue chain is Large ribosomal subunit protein bL21 (100 aa).

This sequence belongs to the bacterial ribosomal protein bL21 family. Part of the 50S ribosomal subunit. Contacts protein L20.

Its function is as follows. This protein binds to 23S rRNA in the presence of protein L20. This is Large ribosomal subunit protein bL21 from Mycoplasma pneumoniae (strain ATCC 29342 / M129 / Subtype 1) (Mycoplasmoides pneumoniae).